A 167-amino-acid chain; its full sequence is Large ribosomal subunit protein uL10 (167 aa).

This sequence belongs to the universal ribosomal protein uL10 family. In terms of assembly, part of the ribosomal stalk of the 50S ribosomal subunit. The N-terminus interacts with L11 and the large rRNA to form the base of the stalk. The C-terminus forms an elongated spine to which L12 dimers bind in a sequential fashion forming a multimeric L10(L12)X complex.

Functionally, forms part of the ribosomal stalk, playing a central role in the interaction of the ribosome with GTP-bound translation factors. The chain is Large ribosomal subunit protein uL10 from Psychromonas ingrahamii (strain DSM 17664 / CCUG 51855 / 37).